Here is a 432-residue protein sequence, read N- to C-terminus: Adenylosuccinate synthetase (432 aa).

GTP contacts are provided by residues 13–19 (GDEGKGK) and 41–43 (GHT). The active-site Proton acceptor is D14. Mg(2+) contacts are provided by D14 and G41. Residues 14–17 (DEGK), 39–42 (NAGH), T130, R144, Q225, T240, and R304 contribute to the IMP site. The active-site Proton donor is H42. Residue 300–306 (ATTGRRR) coordinates substrate. Residues R306, 332-334 (KLD), and 415-417 (STG) each bind GTP.

The protein belongs to the adenylosuccinate synthetase family. Homodimer. Mg(2+) is required as a cofactor.

It is found in the cytoplasm. The catalysed reaction is IMP + L-aspartate + GTP = N(6)-(1,2-dicarboxyethyl)-AMP + GDP + phosphate + 2 H(+). It functions in the pathway purine metabolism; AMP biosynthesis via de novo pathway; AMP from IMP: step 1/2. In terms of biological role, plays an important role in the de novo pathway of purine nucleotide biosynthesis. Catalyzes the first committed step in the biosynthesis of AMP from IMP. This Serratia proteamaculans (strain 568) protein is Adenylosuccinate synthetase.